Here is a 661-residue protein sequence, read N- to C-terminus: UvrABC system protein B (661 aa).

A Helicase ATP-binding domain is found at 25–182; that stretch reads AGLSSKKRSQ…NDLINLQYER (158 aa). An ATP-binding site is contributed by 38–45; sequence GITGSGKT. The Beta-hairpin signature appears at 91–114; that stretch reads YYDYYQPEAYIARTDTFIEKDSSI. The Helicase C-terminal domain maps to 430 to 592; sequence QVEDLISEIQ…IIPKTINRAI (163 aa). Positions 621-656 constitute a UVR domain; it reads KTHIDKLKKEMLKAASNLEFEQAVKLRDQLKTLEAA.

It belongs to the UvrB family. Forms a heterotetramer with UvrA during the search for lesions. Interacts with UvrC in an incision complex.

It localises to the cytoplasm. The UvrABC repair system catalyzes the recognition and processing of DNA lesions. A damage recognition complex composed of 2 UvrA and 2 UvrB subunits scans DNA for abnormalities. Upon binding of the UvrA(2)B(2) complex to a putative damaged site, the DNA wraps around one UvrB monomer. DNA wrap is dependent on ATP binding by UvrB and probably causes local melting of the DNA helix, facilitating insertion of UvrB beta-hairpin between the DNA strands. Then UvrB probes one DNA strand for the presence of a lesion. If a lesion is found the UvrA subunits dissociate and the UvrB-DNA preincision complex is formed. This complex is subsequently bound by UvrC and the second UvrB is released. If no lesion is found, the DNA wraps around the other UvrB subunit that will check the other stand for damage. The protein is UvrABC system protein B of Rickettsia peacockii (strain Rustic).